The primary structure comprises 449 residues: Glucose-6-phosphate isomerase (449 aa).

E291 functions as the Proton donor in the catalytic mechanism. Catalysis depends on residues H312 and K426.

This sequence belongs to the GPI family.

The protein localises to the cytoplasm. It carries out the reaction alpha-D-glucose 6-phosphate = beta-D-fructose 6-phosphate. It participates in carbohydrate biosynthesis; gluconeogenesis. Its pathway is carbohydrate degradation; glycolysis; D-glyceraldehyde 3-phosphate and glycerone phosphate from D-glucose: step 2/4. Catalyzes the reversible isomerization of glucose-6-phosphate to fructose-6-phosphate. The sequence is that of Glucose-6-phosphate isomerase from Pediococcus pentosaceus (strain ATCC 25745 / CCUG 21536 / LMG 10740 / 183-1w).